The following is a 1207-amino-acid chain: DNA-directed RNA polymerase subunit beta' (1207 aa).

The Zn(2+) site is built by Cys-60, Cys-62, Cys-75, and Cys-78. The Mg(2+) site is built by Asp-450, Asp-452, and Asp-454. Residues Cys-819, Cys-893, Cys-900, and Cys-903 each contribute to the Zn(2+) site.

It belongs to the RNA polymerase beta' chain family. In terms of assembly, the RNAP catalytic core consists of 2 alpha, 1 beta, 1 beta' and 1 omega subunit. When a sigma factor is associated with the core the holoenzyme is formed, which can initiate transcription. The cofactor is Mg(2+). Zn(2+) serves as cofactor.

The catalysed reaction is RNA(n) + a ribonucleoside 5'-triphosphate = RNA(n+1) + diphosphate. In terms of biological role, DNA-dependent RNA polymerase catalyzes the transcription of DNA into RNA using the four ribonucleoside triphosphates as substrates. In Streptococcus pyogenes serotype M3 (strain ATCC BAA-595 / MGAS315), this protein is DNA-directed RNA polymerase subunit beta'.